We begin with the raw amino-acid sequence, 417 residues long: Tyrosine--tRNA ligase (417 aa).

Tyr39 contacts L-tyrosine. The 'HIGH' region signature appears at 44–53 (PTAPSLHAGG). Positions 176 and 180 each coordinate L-tyrosine. The 'KMSKS' region motif lies at 236 to 240 (KMGKS). Lys239 contacts ATP. The S4 RNA-binding domain occupies 350–417 (IGVLALMVLA…KKRHVLIRPA (68 aa)).

Belongs to the class-I aminoacyl-tRNA synthetase family. TyrS type 1 subfamily. As to quaternary structure, homodimer.

The protein resides in the cytoplasm. The enzyme catalyses tRNA(Tyr) + L-tyrosine + ATP = L-tyrosyl-tRNA(Tyr) + AMP + diphosphate + H(+). In terms of biological role, catalyzes the attachment of tyrosine to tRNA(Tyr) in a two-step reaction: tyrosine is first activated by ATP to form Tyr-AMP and then transferred to the acceptor end of tRNA(Tyr). This chain is Tyrosine--tRNA ligase, found in Brucella abortus (strain 2308).